A 195-amino-acid chain; its full sequence is NAD(P)H-quinone oxidoreductase subunit J, chloroplastic (195 aa).

This sequence belongs to the complex I 30 kDa subunit family. In terms of assembly, NDH is composed of at least 16 different subunits, 5 of which are encoded in the nucleus.

The protein resides in the plastid. It localises to the chloroplast thylakoid membrane. It carries out the reaction a plastoquinone + NADH + (n+1) H(+)(in) = a plastoquinol + NAD(+) + n H(+)(out). The catalysed reaction is a plastoquinone + NADPH + (n+1) H(+)(in) = a plastoquinol + NADP(+) + n H(+)(out). Its function is as follows. NDH shuttles electrons from NAD(P)H:plastoquinone, via FMN and iron-sulfur (Fe-S) centers, to quinones in the photosynthetic chain and possibly in a chloroplast respiratory chain. The immediate electron acceptor for the enzyme in this species is believed to be plastoquinone. Couples the redox reaction to proton translocation, and thus conserves the redox energy in a proton gradient. In Chlorokybus atmophyticus (Soil alga), this protein is NAD(P)H-quinone oxidoreductase subunit J, chloroplastic.